Reading from the N-terminus, the 272-residue chain is Glutamate racemase (272 aa).

Residues 10-11 (DS) and 42-43 (YG) each bind substrate. The Proton donor/acceptor role is filled by cysteine 73. Substrate is bound at residue 74-75 (NT). Catalysis depends on cysteine 183, which acts as the Proton donor/acceptor. 184–185 (TH) lines the substrate pocket.

Belongs to the aspartate/glutamate racemases family.

It carries out the reaction L-glutamate = D-glutamate. Its pathway is cell wall biogenesis; peptidoglycan biosynthesis. Provides the (R)-glutamate required for cell wall biosynthesis. This Leifsonia xyli subsp. xyli (strain CTCB07) protein is Glutamate racemase.